The sequence spans 148 residues: Large ribosomal subunit protein uL22 (148 aa).

It belongs to the universal ribosomal protein uL22 family. As to quaternary structure, part of the 50S ribosomal subunit.

In terms of biological role, this protein binds specifically to 23S rRNA. It makes multiple contacts with different domains of the 23S rRNA in the assembled 50S subunit and ribosome. The globular domain of the protein is located near the polypeptide exit tunnel on the outside of the subunit, while an extended beta-hairpin is found that lines the wall of the exit tunnel in the center of the 70S ribosome. The sequence is that of Large ribosomal subunit protein uL22 from Thermoplasma volcanium (strain ATCC 51530 / DSM 4299 / JCM 9571 / NBRC 15438 / GSS1).